Here is a 450-residue protein sequence, read N- to C-terminus: Glucose-6-phosphate isomerase (450 aa).

The Proton donor role is filled by Glu-291. Active-site residues include His-312 and Lys-426.

This sequence belongs to the GPI family.

It localises to the cytoplasm. The catalysed reaction is alpha-D-glucose 6-phosphate = beta-D-fructose 6-phosphate. Its pathway is carbohydrate biosynthesis; gluconeogenesis. It participates in carbohydrate degradation; glycolysis; D-glyceraldehyde 3-phosphate and glycerone phosphate from D-glucose: step 2/4. Catalyzes the reversible isomerization of glucose-6-phosphate to fructose-6-phosphate. The chain is Glucose-6-phosphate isomerase from Clostridium botulinum (strain Hall / ATCC 3502 / NCTC 13319 / Type A).